We begin with the raw amino-acid sequence, 968 residues long: RNA polymerase-associated protein RapA (968 aa).

The region spanning 164 to 334 is the Helicase ATP-binding domain; the sequence is DVGRRHAPRV…FARLRLLDPN (171 aa). 177–184 contributes to the ATP binding site; sequence DEVGLGKT. Residues 280–283 carry the DEAH box motif; sequence DEAH. The Helicase C-terminal domain occupies 490–685; the sequence is RVEWLMGYLT…ALKAQLEQGR (196 aa).

The protein belongs to the SNF2/RAD54 helicase family. RapA subfamily. As to quaternary structure, interacts with the RNAP. Has a higher affinity for the core RNAP than for the holoenzyme. Its ATPase activity is stimulated by binding to RNAP.

Transcription regulator that activates transcription by stimulating RNA polymerase (RNAP) recycling in case of stress conditions such as supercoiled DNA or high salt concentrations. Probably acts by releasing the RNAP, when it is trapped or immobilized on tightly supercoiled DNA. Does not activate transcription on linear DNA. Probably not involved in DNA repair. The protein is RNA polymerase-associated protein RapA of Salmonella schwarzengrund (strain CVM19633).